A 1826-amino-acid chain; its full sequence is Protein TIC 214 (1826 aa).

5 helical membrane-spanning segments follow: residues 18 to 38, 67 to 87, 127 to 147, 175 to 195, and 221 to 241; these read IINS…FSIG, FITG…HLAL, LSIQ…HFIL, VGWL…LVWI, and IFSI…PSPI. Positions 250-308 are disordered; that stretch reads TEEGWESEEETDVEIETASETKGTKQEQEGSTEEDPSPSLFSEEKEDPDKIDETEEIRV. Acidic residues-rich tracts occupy residues 252–266 and 293–304; these read EGWE…EIET and EKEDPDKIDETE. Residues 774–794 traverse the membrane as a helical segment; the sequence is LILIIQSIFRKYILLPSLIIV. The disordered stretch occupies residues 1032–1057; that stretch reads TKGLMKEKNSNAKKRGSPNKTSFNRK. The span at 1042–1057 shows a compositional bias: basic residues; that stretch reads NAKKRGSPNKTSFNRK. A helical transmembrane segment spans residues 1081-1101; it reads FYLFITIFIKRIYIDIFVCII.

Belongs to the TIC214 family. In terms of assembly, part of the Tic complex.

The protein localises to the plastid. Its subcellular location is the chloroplast inner membrane. Its function is as follows. Involved in protein precursor import into chloroplasts. May be part of an intermediate translocation complex acting as a protein-conducting channel at the inner envelope. In Daucus carota (Wild carrot), this protein is Protein TIC 214.